We begin with the raw amino-acid sequence, 79 residues long: Sec-independent protein translocase protein TatA (79 aa).

The helical transmembrane segment at 1–21 (MGGFTSIWHWVIVLLVIVLLF) threads the bilayer. The segment at 48-79 (EEEAKNEPKTLDAQVAQTKVHETSEIKSKQES) is disordered. Residues 66-79 (KVHETSEIKSKQES) are compositionally biased toward basic and acidic residues.

This sequence belongs to the TatA/E family. As to quaternary structure, the Tat system comprises two distinct complexes: a TatABC complex, containing multiple copies of TatA, TatB and TatC subunits, and a separate TatA complex, containing only TatA subunits. Substrates initially bind to the TatABC complex, which probably triggers association of the separate TatA complex to form the active translocon.

It is found in the cell inner membrane. Part of the twin-arginine translocation (Tat) system that transports large folded proteins containing a characteristic twin-arginine motif in their signal peptide across membranes. TatA could form the protein-conducting channel of the Tat system. The sequence is that of Sec-independent protein translocase protein TatA from Helicobacter pylori (strain Shi470).